Consider the following 265-residue polypeptide: MGAAAAEADRTLFVGNLETKVTEELLFELFHQAGPVIKVKIPKDKDGKLKQFAFVNFKHEVSVPYAMNLLNGIKLFGRPIKIQFRSGSSHASQDASVSYPQHHVGNLSPTSTSPNSYERTVGNVSPTAQMVQRSFSSPEDYQRQAVMNSVFRQMSYAGKFGSPHADQLGFSPSAQPHGHTFNQSSSSQWRQDALSSQRKRQNSHPYLADRHYSREQRYSDHGSDYHYRGSREDFYYDDRNHDGWSHDYDNRRDSSRGGKWPSSRH.

The residue at position 2 (Gly-2) is an N-acetylglycine. Residues 10-87 (RTLFVGNLET…RPIKIQFRSG (78 aa)) form the RRM domain. 2 ZCCHC8 binding regions span residues 25–35 (LLFELFHQAGP) and 59–76 (HEVSVPYAMNLLNGIKLF). Positions 91–125 (ASQDASVSYPQHHVGNLSPTSTSPNSYERTVGNVS) are disordered. Polar residues predominate over residues 107–125 (LSPTSTSPNSYERTVGNVS). Ser-136 carries the phosphoserine; by MAPKAPK2 modification. Ser-137 carries the post-translational modification Phosphoserine. The residue at position 152 (Arg-152) is an Omega-N-methylarginine. Disordered stretches follow at residues 166–224 (DQLG…HGSD) and 237–265 (DDRNHDGWSHDYDNRRDSSRGGKWPSSRH). Positions 170-196 (FSPSAQPHGHTFNQSSSSQWRQDALSS) are enriched in polar residues. Ser-203 is subject to Phosphoserine. 2 stretches are compositionally biased toward basic and acidic residues: residues 207-224 (LADRHYSREQRYSDHGSD) and 237-256 (DDRNHDGWSHDYDNRRDSSR).

In terms of assembly, component of the nuclear exosome targeting (NEXT) complex composed of MTREX, ZCCHC8, and RBM7 that directs a subset of non-coding short-lived RNAs for exosomal degradation. Interacts with ZCCHC8 and SF3B2/SAP145. Binds to MTREX through ZCCHC8. Interacts with YWHAE and YWHAZ; these interactions are stress-dependent and RBM7 phosphorylation dependent; release RNA from the NEXT complex and may affect RNA targeting to the nuclear RNA exosomome for degradation. Interacts with MEPCE and LARP7, the core subunits of 7SK snRNP; upon genotoxic stress this interaction is enhanced, triggering the release of inactive P-TEFb complex from the core and P-TEFb complex activation. In terms of processing, phosphorylated at Ser-136 by MAPK14/p38-alpha-activated MAPKAPK2/MK2; this phosphorylation is stress-dependent; this phosphorylation decreases its RNA-binding capacity therefore affecting RNA nuclear exosome-mediated degradation. This phosphorylation mediates YWHAE and YWHAZ interactions.

It is found in the nucleus. Its subcellular location is the nucleoplasm. RNA-binding subunit of the trimeric nuclear exosome targeting (NEXT) complex, a complex that functions as an RNA exosome cofactor that directs a subset of non-coding short-lived RNAs for exosomal degradation. NEXT is involved in surveillance and turnover of aberrant transcripts and non-coding RNAs. Binds preferentially polyuridine sequences and associates with newly synthesized RNAs, including pre-mRNAs and short-lived exosome substrates such as promoter upstream transcripts (PROMPTs), enhancer RNAs (eRNAs), and 3'-extended products from small nuclear RNAs (snRNAs). Participates in several biological processes including DNA damage response (DDR) and stress response. During stress response, activation of the p38MAPK-MK2 pathway decreases RBM7-RNA-binding and subsequently the RNA exosome degradation activities, thereby modulating the turnover of non-coding transcriptome. Participates in DNA damage response (DDR), through its interaction with MEPCE and LARP7, the core subunits of 7SK snRNP complex, that release the positive transcription elongation factor b (P-TEFb) complex from the 7SK snRNP. In turn, activation of P-TEFb complex induces the transcription of P-TEFb-dependent DDR genes to promote cell viability. The sequence is that of RNA-binding protein 7 from Mus musculus (Mouse).